The following is a 236-amino-acid chain: MADS-box transcription factor 3 (236 aa).

An MADS-box domain is found at 1 to 61; sequence MGRGKIEIKR…GRLYEYANNS (61 aa). The K-box domain occupies 87-178; sequence AQHYQQESSK…RSKVVENERG (92 aa).

Expressed in lemmas, paleas and lodicules.

It is found in the nucleus. In terms of biological role, probable transcription factor involved in the development of floral organs. Acts as C-class protein in association with MADS58. Involved in the control of lodicule number (whorl 2), stamen specification (whorl 3) and floral meristem determinacy (whorl 4), but not in the regulation of carpel morphogenesis. Plays a more predominant role in controlling lodicule development and in specifying stamen identity than MADS58. In Oryza sativa subsp. japonica (Rice), this protein is MADS-box transcription factor 3 (MADS3).